A 370-amino-acid polypeptide reads, in one-letter code: Galanin receptor type 3 (370 aa).

Over 1–20 (MADIQNISLDSPGSVGAVAV) the chain is Extracellular. The N-linked (GlcNAc...) asparagine glycan is linked to asparagine 6. Residues 21 to 41 (PVVFALIFLLGMVGNGLVLAV) traverse the membrane as a helical segment. At 42 to 57 (LLQPGPSAWQEPGSTT) the chain is on the cytoplasmic side. The helical transmembrane segment at 58–78 (DLFILNLAVADLCFILCCVPF) threads the bilayer. At 79–96 (QAAIYTLDAWLFGAFVCK) the chain is on the extracellular side. A disulfide bond links cysteine 95 and cysteine 172. The chain crosses the membrane as a helical span at residues 97–118 (TVHLLIYLTMYASSFTLAAVSV). Over 119–138 (DRYLAVRHPLRSRALRTPRN) the chain is Cytoplasmic. A helical transmembrane segment spans residues 139–159 (ARAAVGLVWLLAALFSAPYLS). The Extracellular portion of the chain corresponds to 160-184 (YYGTVRYGALELCVPAWEDARRRAL). Residues 185–205 (DVATFAAGYLLPVTVVSLAYG) form a helical membrane-spanning segment. Over 206–236 (RTLCFLWAAVGPAGAAAAEARRRATGRAGRA) the chain is Cytoplasmic. The helical transmembrane segment at 237 to 257 (MLTVAALYALCWGPHHALILC) threads the bilayer. Residues 258–259 (FW) are Extracellular-facing. The chain crosses the membrane as a helical span at residues 260–280 (YGRFAFSPATYACRLASHCLA). Residues 281–370 (YANSCLNPLV…RLTLSARGPQ (90 aa)) are Cytoplasmic-facing. Cysteine 308 carries S-palmitoyl cysteine lipidation. The tract at residues 328–370 (QPASSGPAGYPGDARPRGWSMEPRGDALRGGETRLTLSARGPQ) is disordered. Over residues 350–359 (PRGDALRGGE) the composition is skewed to basic and acidic residues.

The protein belongs to the G-protein coupled receptor 1 family.

Its subcellular location is the cell membrane. In terms of biological role, receptor for the hormone galanin and spexin-1. The chain is Galanin receptor type 3 (Galr3) from Mus musculus (Mouse).